The sequence spans 192 residues: Ribosomal RNA small subunit methyltransferase G (192 aa).

S-adenosyl-L-methionine-binding positions include glycine 63, phenylalanine 68, 112 to 113 (IE), and arginine 125.

The protein belongs to the methyltransferase superfamily. RNA methyltransferase RsmG family.

Its subcellular location is the cytoplasm. The catalysed reaction is guanosine(527) in 16S rRNA + S-adenosyl-L-methionine = N(7)-methylguanosine(527) in 16S rRNA + S-adenosyl-L-homocysteine. In terms of biological role, specifically methylates the N7 position of guanine in position 527 of 16S rRNA. In Rickettsia felis (strain ATCC VR-1525 / URRWXCal2) (Rickettsia azadi), this protein is Ribosomal RNA small subunit methyltransferase G.